A 349-amino-acid polypeptide reads, in one-letter code: Protein O-mannose kinase (349 aa).

The Cytoplasmic portion of the chain corresponds to 1–19 (MGQQHGARNGLTHRELPRG). The chain crosses the membrane as a helical; Signal-anchor for type II membrane protein span at residues 20–42 (MGLLLAMALMNVVLYVCLDHLFI). Residues 43-349 (SPGRATEDPR…TVMSQTKEML (307 aa)) lie on the Lumenal side of the membrane. Asparagine 66, asparagine 164, and asparagine 219 each carry an N-linked (GlcNAc...) asparagine glycan. The Protein kinase domain maps to 80 to 349 (VRQLKLVGEG…TVMSQTKEML (270 aa)).

This sequence belongs to the protein kinase superfamily. Ser/Thr protein kinase family. STKL subfamily.

It is found in the endoplasmic reticulum membrane. The catalysed reaction is 3-O-[beta-D-GalNAc-(1-&gt;3)-beta-D-GlcNAc-(1-&gt;4)-alpha-D-Man]-L-Thr-[protein] + ATP = 3-O-[beta-D-GalNAc-(1-&gt;3)-beta-D-GlcNAc-(1-&gt;4)-(O-6-P-alpha-D-Man)]-Thr-[protein] + ADP + H(+). Its function is as follows. Protein O-mannose kinase that specifically mediates phosphorylation at the 6-position of an O-mannose of the trisaccharide (N-acetylgalactosamine (GalNAc)-beta-1,3-N-acetylglucosamine (GlcNAc)-beta-1,4-mannose) to generate phosphorylated O-mannosyl trisaccharide (N-acetylgalactosamine-beta-1,3-N-acetylglucosamine-beta-1,4-(phosphate-6-)mannose). Phosphorylated O-mannosyl trisaccharide is a carbohydrate structure present in alpha-dystroglycan (DAG1), which is required for binding laminin G-like domain-containing extracellular proteins with high affinity. Only shows kinase activity when the GalNAc-beta-3-GlcNAc-beta-terminus is linked to the 4-position of O-mannose, suggesting that this disaccharide serves as the substrate recognition motif. The chain is Protein O-mannose kinase (Pomk) from Rattus norvegicus (Rat).